Reading from the N-terminus, the 282-residue chain is MYGSCLLEKEAGMYPGTLRSPGGSSTAGVGTSGGSGSPLPASNFTAAPVYPHYVGYPHMSNMDPHGPSLGAWSSPYSPPREDWSTYPGPPSTMGTVPMNDMTSPVFGSPDYSTLGPTSGASNGGSLPDAASESLVSLDSGTSGATSPSRSRHSPYAWMRKTVQVTGKTRTKEKYRVVYTDHQRLELEKEFHCNRYITIRRKSELAVNLGLSERQVKIWFQNRRAKERKMIKKKISQFENTGGSVQSDSGSISPGELPNAFFTTPSAVRGFQPIEIQQVIVSE.

Disordered regions lie at residues 13 to 36 and 98 to 156; these read MYPG…GGSG and MNDM…SPYA. The segment covering 20 to 29 has biased composition (low complexity); it reads SPGGSSTAGV. Polar residues-rich tracts occupy residues 110–124 and 133–148; these read DYST…SNGG and SLVS…TSPS. A DNA-binding region (homeobox) is located at residues 171–230; it reads KEKYRVVYTDHQRLELEKEFHCNRYITIRRKSELAVNLGLSERQVKIWFQNRRAKERKMI.

Belongs to the Caudal homeobox family.

Its subcellular location is the nucleus. This Mus musculus (Mouse) protein is Homeobox protein CDX-4 (Cdx4).